Reading from the N-terminus, the 410-residue chain is Serine hydroxymethyltransferase (410 aa).

Residues L116 and 120–122 contribute to the (6S)-5,6,7,8-tetrahydrofolate site; that span reads GHL. The residue at position 225 (K225) is an N6-(pyridoxal phosphate)lysine.

Belongs to the SHMT family. In terms of assembly, homodimer. Requires pyridoxal 5'-phosphate as cofactor.

The protein resides in the cytoplasm. It catalyses the reaction (6R)-5,10-methylene-5,6,7,8-tetrahydrofolate + glycine + H2O = (6S)-5,6,7,8-tetrahydrofolate + L-serine. The protein operates within one-carbon metabolism; tetrahydrofolate interconversion. Its pathway is amino-acid biosynthesis; glycine biosynthesis; glycine from L-serine: step 1/1. Its function is as follows. Catalyzes the reversible interconversion of serine and glycine with tetrahydrofolate (THF) serving as the one-carbon carrier. This reaction serves as the major source of one-carbon groups required for the biosynthesis of purines, thymidylate, methionine, and other important biomolecules. Also exhibits THF-independent aldolase activity toward beta-hydroxyamino acids, producing glycine and aldehydes, via a retro-aldol mechanism. This chain is Serine hydroxymethyltransferase, found in Lacticaseibacillus casei (strain BL23) (Lactobacillus casei).